A 575-amino-acid polypeptide reads, in one-letter code: MNVFDGSDEEDNNPFSGTTHLYASGIAAVTDGPDDYDFTEPSINGSSDENAQSNAVAEPIEETDEPAEEIDDDTLQTWRFASAELSRSSAFETSYTNLLGQGKNPEVIRIVDAGQYRDIYGKYAIGYKIEFGGIVVTRRYSEFDSLRQSLCRLLPTIIIPPIPSKHPIIKYLFNPLHAKKDIKIIERRQRLLSRFLNNCHKVREIRNHIVFQKFLNPEYFWKEVLNTPPISILPMNNLLAPPLNPTKPSPIHLLLPTPTVLTMRKHEQLIGRNDVMEIKFADYDSDLIRYKAILQPLNKTVRSIRSNIQTYSAVLSELGAYFNAFSLENSVFQVSALFEQMNRLSMGIEKTGQAIDVNYVSAEIFSEAIMISLEEGSKEMLQFIHEAQRVLHFRNFKQEQFYTIETTIKKRKDRIRELKEADLQAVRLGEALKLNAEESPTVAQVMDSMTRKSANKNHTDKQIMGLFRSSASPNNKSGSDSISSEVEPHLLTKDERVVQVNKLEKELEKLNECFKLIEKDLQQVNESMDNSLNNLEKYFHEKWFLIFRELAHNITSWLKDCSESWKNAKQSIDSI.

The segment at 30-66 (TDGPDDYDFTEPSINGSSDENAQSNAVAEPIEETDEP) is disordered. Positions 41–55 (PSINGSSDENAQSNA) are enriched in polar residues. A PX domain is found at 101–221 (QGKNPEVIRI…QKFLNPEYFW (121 aa)). Residues Arg139, Ser141, Lys165, and Arg188 each contribute to the a 1,2-diacyl-sn-glycero-3-phospho-(1D-myo-inositol-3-phosphate) site. The interval 467 to 486 (FRSSASPNNKSGSDSISSEV) is disordered. Positions 469–484 (SSASPNNKSGSDSISS) are enriched in polar residues.

The protein belongs to the sorting nexin family.

The protein resides in the endosome membrane. The protein localises to the endomembrane system. Its function is as follows. May be required for cytoplasm to vacuole transport (Cvt) and pexophagy. In Kluyveromyces lactis (strain ATCC 8585 / CBS 2359 / DSM 70799 / NBRC 1267 / NRRL Y-1140 / WM37) (Yeast), this protein is Sorting nexin-41 (SNX41).